The following is a 369-amino-acid chain: Dual specificity protein phosphatase 1-B (369 aa).

Residues 21–138 (RAHKCLILDC…FSSQCPEFCN (118 aa)) form the Rhodanese domain. T168 carries the phosphothreonine; by MAPK1 modification. The Tyrosine-protein phosphatase domain maps to 175 to 316 (GPVEILPFLY…LLQFESQVLA (142 aa)). The active-site Phosphocysteine intermediate is C260.

It belongs to the protein-tyrosine phosphatase family. Non-receptor class dual specificity subfamily. Post-translationally, phosphorylated by MAPK1/ERK2 at Thr-168 and at one or more serine residues in a progesterone-dependent manner. Phosphorylation reduces its rate of degradation but does not seem to affect phosphatase activity.

It localises to the nucleus. It catalyses the reaction O-phospho-L-seryl-[protein] + H2O = L-seryl-[protein] + phosphate. It carries out the reaction O-phospho-L-threonyl-[protein] + H2O = L-threonyl-[protein] + phosphate. The catalysed reaction is O-phospho-L-tyrosyl-[protein] + H2O = L-tyrosyl-[protein] + phosphate. Its function is as follows. Dual specificity phosphatase that dephosphorylates MAP kinase MAPK1/ERK2 on both 'Thr-188' and 'Tyr-190', regulating its activity during the meiotic cell cycle. This chain is Dual specificity protein phosphatase 1-B, found in Xenopus laevis (African clawed frog).